Reading from the N-terminus, the 461-residue chain is F-box protein At3g62230 (461 aa).

The region spanning 7 to 55 (VDIISTLSDFLLVLIISNLSFKEALSTSRLSTRWRHICRETRNISFRED) is the F-box domain.

Part of a SCF (ASK-cullin-F-box) protein ligase complex. Interacts with ASK4.

The protein resides in the nucleus. It functions in the pathway protein modification; protein ubiquitination. Component of SCF(ASK-cullin-F-box) E3 ubiquitin ligase complexes, which may mediate the ubiquitination and subsequent proteasomal degradation of target proteins. The polypeptide is F-box protein At3g62230 (Arabidopsis thaliana (Mouse-ear cress)).